Consider the following 162-residue polypeptide: Large ribosomal subunit protein uL15 (162 aa).

Residues 1-10 show a composition bias toward basic and acidic residues; it reads MNLNELRDNA. Positions 1 to 39 are disordered; sequence MNLNELRDNAGSRYRKKRLGRGIGSGKGKTSGKGVKGQK. Positions 21 to 35 are enriched in gly residues; sequence RGIGSGKGKTSGKGV.

This sequence belongs to the universal ribosomal protein uL15 family. Part of the 50S ribosomal subunit.

In terms of biological role, binds to the 23S rRNA. This Gluconacetobacter diazotrophicus (strain ATCC 49037 / DSM 5601 / CCUG 37298 / CIP 103539 / LMG 7603 / PAl5) protein is Large ribosomal subunit protein uL15.